Consider the following 501-residue polypeptide: L-lysine transport protein (501 aa).

The next 13 membrane-spanning stretches (helical) occupy residues 25-41 (LIAL…IFSI), 52-76 (GAML…HVLA), 92-113 (VGLG…SVIA), 138-155 (FVSA…FGVV), 174-191 (ILPL…GFSW), 214-232 (GIMV…ASVY), 247-269 (VIGF…GVLT), 292-316 (WGAA…QMLC), 340-362 (GAAW…IFFL), 377-393 (LYLV…VMLA), 424-440 (LIVG…LFYA), 447-463 (LFGA…YVWT), and 477-495 (IGVV…IGLV).

The protein belongs to the amino acid-polyamine-organocation (APC) superfamily. Basic amino acid/polyamine antiporter (APA) (TC 2.A.3.2) family.

It is found in the cell membrane. In terms of biological role, permease that is involved in the transport across the membrane of lysine. This is L-lysine transport protein (lysI) from Corynebacterium glutamicum (strain ATCC 13032 / DSM 20300 / JCM 1318 / BCRC 11384 / CCUG 27702 / LMG 3730 / NBRC 12168 / NCIMB 10025 / NRRL B-2784 / 534).